A 754-amino-acid chain; its full sequence is Nibrin (754 aa).

Positions 24-83 (YVVGRKNCAILIEKDQSISRNHAVLTANFSVTNLSQTDEIPVLALKDNSKYGTFVNEEKM) constitute an FHA domain. 2 BRCT domains span residues 105-181 (KFRI…TEFL) and 224-315 (GKTF…LAVI). A mediates interaction with SP100 region spans residues 111-328 (EPLVACSSCL…TKNYCDPQGH (218 aa)). The interaction with MTOR, MAPKAP1 and RICTOR stretch occupies residues 221–402 (IFKGKTFIFL…FRMLSQDAPT (182 aa)). A Phosphoserine; by ATM modification is found at S278. The tract at residues 326–346 (QGHPSTGLKTTTPGPSLSQGL) is disordered. Positions 328 to 346 (HPSTGLKTTTPGPSLSQGL) are enriched in polar residues. At T337 the chain carries Phosphothreonine. Residue S343 is modified to Phosphoserine; by ATM. S347 is subject to Phosphoserine. At K388 the chain carries N6-lactoyllysine. 2 disordered regions span residues 396–415 (LSQDAPTVKESCKTSSNNNS) and 431–475 (LSPT…NQEM). Residue S397 is modified to Phosphoserine. Position 402 is a phosphothreonine (T402). Polar residues-rich tracts occupy residues 431-440 (LSPTKLPSIN) and 447-462 (SQQQQTNSIRNYFQPS). A Phosphoserine modification is found at S432. Residue K435 forms a Glycyl lysine isopeptide (Lys-Gly) (interchain with G-Cter in ubiquitin) linkage. A Nuclear localization signal motif is present at residues 461–467 (PSTKKRE). Phosphoserine is present on residues S509 and S518. Glycyl lysine isopeptide (Lys-Gly) (interchain with G-Cter in SUMO2) cross-links involve residues K571 and K582. 2 positions are modified to phosphoserine: S615 and S673. Residues K686, K690, and K735 each participate in a glycyl lysine isopeptide (Lys-Gly) (interchain with G-Cter in ubiquitin) cross-link. The FxF/Y motif motif lies at 740–749 (ADDLFRYNPY).

Belongs to the Nibrin family. In terms of assembly, component of the MRN complex composed of two heterodimers RAD50 and MRE11 associated with a single NBN. The MRN complexes dimerize on DNA to form joined MRN-MRN oligomers required for DNA double-strand break repair. The MRN complexes dimerize on DNA to form joined MRN-MRN oligomers required for DNA double-strand break repair. As part of the MRN complex, interacts with MCM9; the interaction recruits the complex to DNA repair sites. Component of the BASC complex, at least composed of BRCA1, MSH2, MSH6, MLH1, ATM, BLM, RAD50, MRE11 and NBN. Interacts with histone H2AX; this requires phosphorylation of H2AX on 'Ser-139' and promotes NBN recruitment to DNA damage sites. Interacts with (phosphorylated) MDC1; promoting NBN recruitment to DNA damage sites. Interacts with (phosphorylated) RAD17; promoting NBN recruitment to DNA damage sites. Interacts (via FxF/Y motif) with ATM. Interacts with HJURP. Interacts with INTS3. Interacts with KPNA2. Interacts with TERF2; interaction is disrupted upon NBN phosphorylation by CDK2. Interacts with (phosphorylated) RBBP8/CtIP; the interaction links the role of the MRN complex in DNA double-strand break sensing to resection. Interacts with SP100; recruits NBN to PML bodies. Interacts with ATF2. Interacts with MTOR, MAPKAP1 isoform 2 and RICTOR; indicative for an association with the mTORC2 complex. Interacts with MRNIP. Interacts with UFL1; promoting UFL1 recruitment to double-strand breaks following DNA damage. Interacts with CYREN (via XLF motif). Phosphorylated by ATM in response of ionizing radiation, and such phosphorylation is responsible intra-S phase checkpoint control and telomere maintenance. Phosphorylated at Ser-432 by CDK2 in S/G2 phases abolishes interaction with TERF2, enabling DCLRE1B/Apollo recruitment to telomeres. Phosphorylation at Ser-432 in response to dysfunctional telomeres promotes non-homologous end joining repair at telomeres, while dephosphorylation by PPP1CA promotes microhomology-mediated end-joining (MMEJ) repair. In terms of processing, ubiquitinated at Lys-435 via 'Lys-6'-linked ubiquitin chains by RNF8, promoting NBN recruitment to DNA double-strand breaks (DSBs). Ubiquitinated at Lys-686 and Lys-689 via 'Lys-63'-linked ubiquitin chains by PELI1: ubiquitination takes place following PELI1 phosphorylation and promotes ATM activation and DNA repair. Ubiquitinated at Lys-735 via 'Lys-63'-linked ubiquitin chains by the SCF(SKP2) complex: ubiquitination takes place following SKP2 phosphorylation and promotes ATM activation and DNA repair. Post-translationally, lactylation at Lys-388 by KAT5 in response to DNA damage promotes recruitment of the MRN complex to DNA damage sites. Delactylated by HDAC3.

It is found in the nucleus. The protein localises to the chromosome. Its subcellular location is the PML body. It localises to the telomere. Component of the MRN complex, which plays a central role in double-strand break (DSB) repair, DNA recombination, maintenance of telomere integrity and meiosis. The MRN complex is involved in the repair of DNA double-strand breaks (DSBs) via homologous recombination (HR), an error-free mechanism which primarily occurs during S and G2 phases. The complex (1) mediates the end resection of damaged DNA, which generates proper single-stranded DNA, a key initial steps in HR, and is (2) required for the recruitment of other repair factors and efficient activation of ATM and ATR upon DNA damage. The MRN complex possesses single-strand endonuclease activity and double-strand-specific 3'-5' exonuclease activity, which are provided by MRE11, to initiate end resection, which is required for single-strand invasion and recombination. Within the MRN complex, NBN acts as a protein-protein adapter, which specifically recognizes and binds phosphorylated proteins, promoting their recruitment to DNA damage sites. Recruits MRE11 and RAD50 components of the MRN complex to DSBs in response to DNA damage. Promotes the recruitment of PI3/PI4-kinase family members ATM, ATR, and probably DNA-PKcs to the DNA damage sites, activating their functions. Mediates the recruitment of phosphorylated RBBP8/CtIP to DSBs, leading to cooperation between the MRN complex and RBBP8/CtIP to initiate end resection. RBBP8/CtIP specifically promotes the endonuclease activity of the MRN complex to clear DNA ends containing protein adducts. The MRN complex is also required for the processing of R-loops. NBN also functions in telomere length maintenance via its interaction with TERF2: interaction with TERF2 during G1 phase preventing recruitment of DCLRE1B/Apollo to telomeres. NBN also promotes DNA repair choice at dysfunctional telomeres: NBN phosphorylation by CK2 promotes non-homologous end joining repair at telomeres, while unphosphorylated NBN promotes microhomology-mediated end-joining (MMEJ) repair. Enhances AKT1 phosphorylation possibly by association with the mTORC2 complex. The chain is Nibrin (NBN) from Pongo abelii (Sumatran orangutan).